A 383-amino-acid chain; its full sequence is MEVLATDTASQQERLQAIAEKRRKQAEIESKRRQLEDDRRQLQYLKSKALRERWLLEGTPSSASEGDEDMRKQMQEDEQKARGLEESITRLEKEIDVLEFGESAPAASKENSAAPSPGRPQSASPAKEEQKSETLVNAQQTPLGTPKENRTSTPVRSPGGSTMMKAAMYSVEITVEKDKVTGETRVLSSTTVLPRDPLPQGVKVYEDETKVVHAVDGIAENGIQPLSSSEVDELIHKADEVTLSEAGSTAGPAEPRGLAEDVTRTTPSRREITGVEAQPGEATSGPPGIQPGQEPPVTMVFMGYQNVEDEAETKKVLGLQDTIKAELVVIEDAATPREPAPLNGSAAELPATKEENQTGPTTTPSDTQDLDMKKPRCRCCSVM.

N-acetylmethionine is present on M1. Residues 5-102 (ATDTASQQER…KEIDVLEFGE (98 aa)) are a coiled coil. Disordered regions lie at residues 51-163 (RERW…GSTM), 242-295 (TLSE…GQEP), and 334-375 (ATPR…MKKP). The segment covering 69 to 96 (DMRKQMQEDEQKARGLEESITRLEKEID) has biased composition (basic and acidic residues). Polar residues-rich tracts occupy residues 109-124 (KENS…QSAS) and 133-143 (ETLVNAQQTPL). Phosphoserine occurs at positions 116, 122, and 124. Phosphothreonine is present on residues T141, T145, and T153. Residues S157 and S161 each carry the phosphoserine modification. T242 is modified (phosphothreonine). Phosphoserine is present on S244. The segment covering 257-273 (GLAEDVTRTTPSRREIT) has biased composition (basic and acidic residues). Residues 285–295 (GPPGIQPGQEP) are compositionally biased toward low complexity. Phosphoserine is present on S345. Polar residues predominate over residues 357-367 (QTGPTTTPSDT). T361, T362, and T363 each carry phosphothreonine. A Phosphoserine modification is found at S365. At T367 the chain carries Phosphothreonine. S-palmitoyl cysteine attachment occurs at residues C377 and C379. Position 380 is a cysteine methyl ester (C380). C380 is lipidated: S-farnesyl cysteine. Positions 381–383 (SVM) are cleaved as a propeptide — removed in mature form.

Belongs to the paralemmin family. Interacts with dopamine receptor DRD3. As to expression, expression is highest in brain, intermediate in adrenal gland and kidney, and much lower or undetectable in other tissues. Isoform 1 is the predominant isoform in most tissues except brain and kidney where isoform 2 predominates.

The protein localises to the cell membrane. It is found in the cell projection. It localises to the filopodium membrane. Its subcellular location is the axon. The protein resides in the dendrite. The protein localises to the dendritic spine. It is found in the basolateral cell membrane. It localises to the apicolateral cell membrane. Involved in plasma membrane dynamics and cell process formation. Isoform 1 and isoform 2 are necessary for axonal and dendritic filopodia induction, for dendritic spine maturation and synapse formation in a palmitoylation-dependent manner. This is Paralemmin-1 (Palm) from Mus musculus (Mouse).